The primary structure comprises 313 residues: Protoheme IX farnesyltransferase (313 aa).

A run of 9 helical transmembrane segments spans residues 29–49, 57–77, 101–123, 124–144, 157–177, 185–205, 225–245, 247–267, and 287–307; these read VISLLLWTTVTAMFMAARGWP, LWLLIVVSVAGYMSAGSAGVF, LISSRNAAIFGTTLQVLSFVMLW, VWGTPLAAWMSLAGFVFYVVI, IVIGGAAGCFPPLVGWAAVTG, YLFAIIFFWTPVHFWALALMI, MTVAQIGLYAIYTVVLSLMPV, FGAVSWIYFVSGALLGAWLLW, and AVPLYLYSMLYLALLFLAGAI.

This sequence belongs to the UbiA prenyltransferase family. Protoheme IX farnesyltransferase subfamily.

It is found in the cell membrane. The catalysed reaction is heme b + (2E,6E)-farnesyl diphosphate + H2O = Fe(II)-heme o + diphosphate. The protein operates within porphyrin-containing compound metabolism; heme O biosynthesis; heme O from protoheme: step 1/1. In terms of biological role, converts heme B (protoheme IX) to heme O by substitution of the vinyl group on carbon 2 of heme B porphyrin ring with a hydroxyethyl farnesyl side group. The chain is Protoheme IX farnesyltransferase from Deinococcus radiodurans (strain ATCC 13939 / DSM 20539 / JCM 16871 / CCUG 27074 / LMG 4051 / NBRC 15346 / NCIMB 9279 / VKM B-1422 / R1).